The chain runs to 227 residues: Orotidine 5'-phosphate decarboxylase (227 aa).

Substrate is bound by residues Asp8, Lys30, 58 to 67 (DLKVHDIPNT), Thr117, Arg177, Gln186, Gly206, and Arg207. Residue Lys60 is the Proton donor of the active site.

It belongs to the OMP decarboxylase family. Type 1 subfamily. In terms of assembly, homodimer.

The enzyme catalyses orotidine 5'-phosphate + H(+) = UMP + CO2. It participates in pyrimidine metabolism; UMP biosynthesis via de novo pathway; UMP from orotate: step 2/2. Functionally, catalyzes the decarboxylation of orotidine 5'-monophosphate (OMP) to uridine 5'-monophosphate (UMP). In Campylobacter fetus subsp. fetus (strain 82-40), this protein is Orotidine 5'-phosphate decarboxylase.